Reading from the N-terminus, the 90-residue chain is Small ribosomal subunit protein bS20 (90 aa).

The segment at M1 to A27 is disordered.

Belongs to the bacterial ribosomal protein bS20 family.

In terms of biological role, binds directly to 16S ribosomal RNA. The protein is Small ribosomal subunit protein bS20 of Coxiella burnetii (strain CbuK_Q154) (Coxiella burnetii (strain Q154)).